A 225-amino-acid polypeptide reads, in one-letter code: UPF0758 protein NMC1174 (225 aa).

One can recognise an MPN domain in the interval 102–224 (VLSDPDTVAD…VRSFRQLGLM (123 aa)). The Zn(2+) site is built by histidine 173, histidine 175, and aspartate 186. Residues 173 to 186 (HNHPGGSPEPSQED) carry the JAMM motif motif.

This sequence belongs to the UPF0758 family.

This chain is UPF0758 protein NMC1174, found in Neisseria meningitidis serogroup C / serotype 2a (strain ATCC 700532 / DSM 15464 / FAM18).